The primary structure comprises 545 residues: MGQVLPVFAHCKEAPSTASSTPDSTEGGNDDSDFRELHTAREFSEEDEEETTSQDWGTPRELTFSYIAFDGVVGSGGRRDSTARRPRPQGRSVSEPRDQHPQPSLGDSLESIPSLSQSPEPGRRGDPDTAPPSERPLEDLRLRLDHLGWVARGTGSGEDSSTSSSTPLEDEEPQEPNRLETGEAGEELDLRLRLAQPSSPEVLTPQLSPGSGTPQAGTPSPSRSRDSNSGPEEPLLEEEEKQWGPLEREPVRGQCLDSTDQLEFTVEPRLLGTAMEWLKTSLLLAVYKTVPILELSPPLWTAIGWVQRGPTPPTPVLRVLLKWAKSPRSSGVPSLSLGADMGSKVADLLYWKDTRTSGVVFTGLMVSLLCLLHFSIVSVAAHLALLLLCGTISLRVYRKVLQAVHRGDGANPFQAYLDVDLTLTREQTERLSHQITSRVVSAATQLRHFFLVEDLVDSLKLALLFYILTFVGAIFNGLTLLILGVIGLFTIPLLYRQHQAQIDQYVGLVTNQLSHIKAKIRAKIPGTGALASAAAAVSGSKAKAE.

Disordered stretches follow at residues 1–183 (MGQV…ETGE) and 199–250 (SPEV…EREP). The segment covering 14–25 (APSTASSTPDST) has biased composition (low complexity). A compositionally biased stretch (basic and acidic residues) spans 32 to 43 (SDFRELHTAREF). Ser-44 carries the phosphoserine modification. Basic and acidic residues predominate over residues 135 to 146 (RPLEDLRLRLDH). Low complexity predominate over residues 157-166 (GEDSSTSSST). Positions 199-230 (SPEVLTPQLSPGSGTPQAGTPSPSRSRDSNSG) are enriched in polar residues. Residues Ser-227 and Ser-229 each carry the phosphoserine modification. One can recognise a Reticulon domain in the interval 345 to 545 (VADLLYWKDT…AVSGSKAKAE (201 aa)). The next 2 helical transmembrane spans lie at 368–388 (LLCL…LLLL) and 463–483 (LLFY…LLIL).

As to quaternary structure, interacts with isoform 1 but not isoform 3 of SPAST. Interacts with BACE1. Interacts (via first transmembrane domain) with ARL6IP5/GTRAP3-18. Interacts (via N-terminus) with SLC1A1/EAAC1; the interaction promotes cell surface expression of SLC1A1. In terms of assembly, interacts with TMEM33. In terms of tissue distribution, highly expressed in skeletal muscle.

Its subcellular location is the endoplasmic reticulum membrane. The protein resides in the sarcoplasmic reticulum membrane. It localises to the cell membrane. The protein localises to the sarcolemma. It is found in the T-tubule. Its subcellular location is the cytoplasm. The protein resides in the myofibril. It localises to the sarcomere. The protein localises to the z line. It is found in the cytoskeleton. Inhibits amyloid precursor protein processing, probably by blocking BACE1 activity. Enhances trafficking of the glutamate transporter SLC1A1/EAAC1 from the endoplasmic reticulum to the cell surface. Plays a role in the translocation of SLC2A4/GLUT4 from intracellular membranes to the cell membrane which facilitates the uptake of glucose into the cell. In Homo sapiens (Human), this protein is Reticulon-2 (RTN2).